We begin with the raw amino-acid sequence, 296 residues long: Protoheme IX farnesyltransferase (296 aa).

Helical transmembrane passes span 8–28 (VTKP…FFLA), 35–55 (WILM…GCAI), 84–104 (AAFF…SYFT), 107–127 (VAVA…TMYF), 132–152 (VYGT…GYCA), 162–182 (AILL…IAIF), 215–235 (FAVV…FMVV), and 264–284 (VFFF…LDFN).

The protein belongs to the UbiA prenyltransferase family. Protoheme IX farnesyltransferase subfamily.

The protein localises to the cell inner membrane. It carries out the reaction heme b + (2E,6E)-farnesyl diphosphate + H2O = Fe(II)-heme o + diphosphate. It participates in porphyrin-containing compound metabolism; heme O biosynthesis; heme O from protoheme: step 1/1. In terms of biological role, converts heme B (protoheme IX) to heme O by substitution of the vinyl group on carbon 2 of heme B porphyrin ring with a hydroxyethyl farnesyl side group. In Marinomonas sp. (strain MWYL1), this protein is Protoheme IX farnesyltransferase.